The chain runs to 273 residues: F-actin-capping protein subunit alpha (273 aa).

This sequence belongs to the F-actin-capping protein alpha subunit family. Heterodimer of an alpha and a beta subunit.

Its subcellular location is the cytoplasm. The protein localises to the cytoskeleton. F-actin-capping proteins bind in a Ca(2+)-independent manner to the fast growing ends of actin filaments (barbed end) thereby blocking the exchange of subunits at these ends. Unlike other capping proteins (such as gelsolin and severin), these proteins do not sever actin filaments. This is F-actin-capping protein subunit alpha (cap1) from Emericella nidulans (strain FGSC A4 / ATCC 38163 / CBS 112.46 / NRRL 194 / M139) (Aspergillus nidulans).